The following is a 252-amino-acid chain: MVDPLCNYNVLEAIFSYLELNDLYRCSQVCKSWYHFLNDENSDVWRWHCLRKLPKESVKSDLLASVSTYKTKLRAYLHAWSPNDCSRNVYIKPNGFTLHRNPVAQSTDAARGKIGFRQGRHAWEVIWEGPLGTVAVIGISTKEAALQCHGYVALLGSDDQSWGWNLVENHLLHNGDMQGNYPLLNNAPKYQVGERIRVILDCDDNTLSFEKNYEFLGVAFRGLPDKKLYPTVSAVYGNTEVSMVYLGTPLDG.

The F-box domain maps to 1 to 48 (MVDPLCNYNVLEAIFSYLELNDLYRCSQVCKSWYHFLNDENSDVWRWH). The B30.2/SPRY domain occupies 58 to 250 (VKSDLLASVS…VSMVYLGTPL (193 aa)).

It belongs to the FBXO45/Fsn family. In terms of assembly, component of an E3 ubiquitin ligase complex composed of hiw and Fsn.

The protein resides in the synapse. It participates in protein modification; protein ubiquitination. Required in the presynaptic motoneuron to down-regulate the levels of wnd and restrain synaptic terminal growth at the neuromuscular junction (NMJ). The polypeptide is F-box/SPRY domain-containing protein 1 (Drosophila virilis (Fruit fly)).